A 145-amino-acid polypeptide reads, in one-letter code: Chaperonin GroEL (145 aa).

It belongs to the chaperonin (HSP60) family. As to quaternary structure, forms a cylinder of 14 subunits composed of two heptameric rings stacked back-to-back. Interacts with the co-chaperonin GroES.

It localises to the cytoplasm. It carries out the reaction ATP + H2O + a folded polypeptide = ADP + phosphate + an unfolded polypeptide.. Functionally, together with its co-chaperonin GroES, plays an essential role in assisting protein folding. The GroEL-GroES system forms a nano-cage that allows encapsulation of the non-native substrate proteins and provides a physical environment optimized to promote and accelerate protein folding. In Thermus thermophilus, this protein is Chaperonin GroEL.